The sequence spans 130 residues: Fumarate reductase subunit C (130 aa).

3 consecutive transmembrane segments (helical) span residues alanine 33–glycine 53, phenylalanine 60–alanine 80, and valine 109–leucine 129.

It belongs to the FrdC family. Part of an enzyme complex containing four subunits: a flavoprotein (FrdA), an iron-sulfur protein (FrdB), and two hydrophobic anchor proteins (FrdC and FrdD).

Its subcellular location is the cell inner membrane. Two distinct, membrane-bound, FAD-containing enzymes are responsible for the catalysis of fumarate and succinate interconversion; fumarate reductase is used in anaerobic growth, and succinate dehydrogenase is used in aerobic growth. Anchors the catalytic components of the fumarate reductase complex to the cell inner membrane, binds quinones. The polypeptide is Fumarate reductase subunit C (Photorhabdus laumondii subsp. laumondii (strain DSM 15139 / CIP 105565 / TT01) (Photorhabdus luminescens subsp. laumondii)).